The following is a 252-amino-acid chain: Type II secretion system protein N (252 aa).

The Cytoplasmic portion of the chain corresponds to 1 to 4; the sequence is MKNR. A helical transmembrane segment spans residues 5 to 25; sequence LTIGLLLAAIYLFWLLLSAPA. At 26-252 the chain is on the periplasmic side; sequence RLLALTLSDD…QGEWLSEEKK (227 aa).

This sequence belongs to the GSP N family.

It localises to the cell inner membrane. Involved in a type II secretion system (T2SS, formerly general secretion pathway, GSP) for the export of proteins. Required for the translocation of pullulanase. This chain is Type II secretion system protein N (pulN), found in Klebsiella pneumoniae.